The following is a 462-amino-acid chain: Anthranilate synthase component 1 (462 aa).

L-tryptophan is bound by residues Ser-46 and 243 to 245 (PHM). Residue 278-279 (GT) coordinates chorismate. Residue Glu-305 coordinates Mg(2+). Chorismate-binding positions include Tyr-394, Arg-414, 428 to 430 (SGG), and Gly-430. Glu-444 is a binding site for Mg(2+).

The protein belongs to the anthranilate synthase component I family. As to quaternary structure, heterotetramer consisting of two non-identical subunits: a beta subunit (TrpG) and a large alpha subunit (TrpE). Mg(2+) is required as a cofactor.

It catalyses the reaction chorismate + L-glutamine = anthranilate + pyruvate + L-glutamate + H(+). It functions in the pathway amino-acid biosynthesis; L-tryptophan biosynthesis; L-tryptophan from chorismate: step 1/5. Feedback inhibited by tryptophan. In terms of biological role, part of a heterotetrameric complex that catalyzes the two-step biosynthesis of anthranilate, an intermediate in the biosynthesis of L-tryptophan. In the first step, the glutamine-binding beta subunit (TrpG) of anthranilate synthase (AS) provides the glutamine amidotransferase activity which generates ammonia as a substrate that, along with chorismate, is used in the second step, catalyzed by the large alpha subunit of AS (TrpE) to produce anthranilate. In the absence of TrpG, TrpE can synthesize anthranilate directly from chorismate and high concentrations of ammonia. The chain is Anthranilate synthase component 1 (trpE) from Leptospira biflexa.